The chain runs to 95 residues: Complement inhibitor RaCI5 (95 aa).

Positions 1-21 are cleaved as a signal peptide; it reads MNAVIVLCVTISAVLIHQCYS. Disulfide bonds link cysteine 35–cysteine 59, cysteine 40–cysteine 61, and cysteine 55–cysteine 76.

The protein belongs to the RaCI family. In terms of tissue distribution, expressed in salivary glands.

It localises to the secreted. In terms of biological role, complement inhibitor. Prevents complement-mediated C5 activation by binding to C5. Binds C5 at a different binding site than the other tick complement inhibitors OmCI and CirpT1, and the drug eculizumab. The sequence is that of Complement inhibitor RaCI5 from Rhipicephalus appendiculatus (Brown ear tick).